Here is a 311-residue protein sequence, read N- to C-terminus: Methionyl-tRNA formyltransferase (311 aa).

110 to 113 (SLLP) provides a ligand contact to (6S)-5,6,7,8-tetrahydrofolate.

It belongs to the Fmt family.

The catalysed reaction is L-methionyl-tRNA(fMet) + (6R)-10-formyltetrahydrofolate = N-formyl-L-methionyl-tRNA(fMet) + (6S)-5,6,7,8-tetrahydrofolate + H(+). Attaches a formyl group to the free amino group of methionyl-tRNA(fMet). The formyl group appears to play a dual role in the initiator identity of N-formylmethionyl-tRNA by promoting its recognition by IF2 and preventing the misappropriation of this tRNA by the elongation apparatus. The chain is Methionyl-tRNA formyltransferase from Streptococcus thermophilus (strain ATCC BAA-250 / LMG 18311).